We begin with the raw amino-acid sequence, 79 residues long: Acyl carrier protein (79 aa).

The Carrier domain maps to 2–77 (SEVAEKVKKI…DAIDYIEKKK (76 aa)). Ser-37 carries the O-(pantetheine 4'-phosphoryl)serine modification.

This sequence belongs to the acyl carrier protein (ACP) family. In terms of processing, 4'-phosphopantetheine is transferred from CoA to a specific serine of apo-ACP by AcpS. This modification is essential for activity because fatty acids are bound in thioester linkage to the sulfhydryl of the prosthetic group.

It localises to the cytoplasm. It functions in the pathway lipid metabolism; fatty acid biosynthesis. Functionally, carrier of the growing fatty acid chain in fatty acid biosynthesis. The chain is Acyl carrier protein from Acidiphilium cryptum (strain JF-5).